Here is a 1976-residue protein sequence, read N- to C-terminus: Myosin-10 (1976 aa).

An Omega-N-methylarginine modification is found at Arg18. In terms of domain architecture, Myosin N-terminal SH3-like spans 31–81 (TAKKLVWIPSERHGFEAASIKEERGDEVMVELAENGKKAMVNKDDIQKMNP). In terms of domain architecture, Myosin motor spans 85-783 (SKVEDMAELT…VLAHLEEERD (699 aa)). 178–185 (GESGAGKT) is a binding site for ATP. At Lys442 the chain carries N6-acetyllysine. The actin-binding stretch occupies residues 661 to 683 (LTKLMATLRNTNPNFVRCIIPNH). Residues 786 to 815 (ITDIIIFFQAVCRGYLARKAFAKKQQQLSA) enclose the IQ domain. Positions 845-1976 (LQVTRQEEEL…VNDTQPPQSE (1132 aa)) form a coiled coil. The tract at residues 1125-1175 (EDFESEKASRNKAEKQKRDLSEELEALKTELEDTLDTTAAQQELRTKREQE) is disordered. Over residues 1129–1155 (SEKASRNKAEKQKRDLSEELEALKTEL) the composition is skewed to basic and acidic residues. At Ser1145 the chain carries Phosphoserine. Lys1241, Lys1301, and Lys1645 each carry N6-acetyllysine. Disordered stretches follow at residues 1697-1718 (ASSERARRHAEQERDELADEIA) and 1874-1976 (KANA…PQSE). Over residues 1698 to 1708 (SSERARRHAEQ) the composition is skewed to basic and acidic residues. At Arg1930 the chain carries Omega-N-methylarginine. 4 positions are modified to phosphoserine: Ser1935, Ser1937, Ser1938, and Ser1939. An Omega-N-methylarginine modification is found at Arg1940. A phosphoserine mark is found at Ser1952 and Ser1956. Thr1960 carries the post-translational modification Phosphothreonine. A compositionally biased stretch (polar residues) spans 1967-1976 (VNDTQPPQSE). Ser1975 bears the Phosphoserine mark.

This sequence belongs to the TRAFAC class myosin-kinesin ATPase superfamily. Myosin family. As to quaternary structure, myosin is a hexameric protein that consists of 2 heavy chain subunits (MHC), 2 alkali light chain subunits (MLC) and 2 regulatory light chain subunits (MLC-2). Interacts with PLEKHG6. Interacts with ECPAS. Interacts with LARP6. Interacts with MCC. Interacts with KIF26B. Interacts with CFAP95. Post-translationally, phosphorylated by ABL2. In newborn kidney, expressed in the mesenchyme and ureteric buds.

The protein localises to the cell projection. It is found in the lamellipodium. Involved with LARP6 in the stabilization of type I collagen mRNAs for CO1A1 and CO1A2. During cell spreading, plays an important role in cytoskeleton reorganization, focal contacts formation (in the central part but not the margins of spreading cells), and lamellipodial extension; this function is mechanically antagonized by MYH9. Cellular myosin that appears to play a role in cytokinesis, cell shape, and specialized functions such as secretion and capping. The sequence is that of Myosin-10 (Myh10) from Mus musculus (Mouse).